The primary structure comprises 96 residues: ESAT-6-like protein EsxR (96 aa).

This sequence belongs to the WXG100 family. ESAT-6 subfamily.

It is found in the secreted. This is ESAT-6-like protein EsxR from Mycobacterium bovis (strain ATCC BAA-935 / AF2122/97).